A 324-amino-acid polypeptide reads, in one-letter code: Aldo-keto reductase family 1 member C15 (324 aa).

NADP(+) contacts are provided by residues 24-26 and Asp51; that span reads TFA. Tyr56 functions as the Proton donor in the catalytic mechanism. His118 contacts substrate. Residues 167 to 168, Gln191, 217 to 225, and 269 to 281 contribute to the NADP(+) site; these read SN, YSALGSHRD, and LAKS…IKEN.

It belongs to the aldo/keto reductase family. As to quaternary structure, monomer. Expressed in lung, specifically in bronchiolar club cells, type II alveolar cells and epithelial cells of the duct of the bronchial gland (at protein level). Expressed in gastric parietal cells and in epithelial cells of the large intestine and colon (at protein level). Expressed in brown adipocytes (at protein level). Expressed in vascular endothelial cells (at protein level).

The protein resides in the cytoplasm. The catalysed reaction is (2E,6E)-farnesol + NADP(+) = (2E,6E)-farnesal + NADPH + H(+). With respect to regulation, the dehydrogenase activity is inhibited by 3',3'',5',5''-tetraiodophenolphthalein, phenolphthalein, genistein, quercetin, zearalenone and diethylstilbestrol. Its function is as follows. Catalyzes the NADPH-dependent reduction of a variety of substrates including aromatic and aliphatic aldehydes, quinones, ketones, dicarbonyl compounds and 17-ketosteroids. Catalyzes the NADP(+)-dependent oxidation of aromatic, alicyclic and aliphatic alcohols, and 17beta-hydroxysteroids. To a lesser extent, can also catalyze the reduction of some aldoses and ketoses and the oxidation of some sugar alcohols. In the stomach, lung and colon tissues, mediates the reduction of farnesal and geranylgeranial into farnesol and geranylgeraniol respectively. By reducing 4-hydroxy-2-nonenal (HNE), produced during lipid peroxidation, into 1,4-dihydro-2-nonene (DHN), protects vascular endothelial cells from damage elicited by oxidized lipoproteins. The protein is Aldo-keto reductase family 1 member C15 of Rattus norvegicus (Rat).